A 2697-amino-acid chain; its full sequence is Target of rapamycin homolog (2697 aa).

Residues 1–25 (MLQQHGISFQMNADRQNKAATTSNR) form a disordered region. 7 HEAT repeats span residues 235-272 (LRVN…IVSQ), 649-687 (QTIY…PFLA), 689-726 (LAQP…LNPA), 731-768 (RLRL…QSPK), 815-853 (KNLK…STAY), 863-900 (SLLD…YTHK), and 1073-1110 (KYTG…LTHC). Residues 1438–2153 (VLGRWAEQTK…IYALTVASRS (716 aa)) form the FAT domain. Disordered regions lie at residues 1945–1981 (TVIS…PQPA) and 2017–2039 (SNSS…PSNS). Pro residues predominate over residues 1969–1981 (SPPPPAQKSPQPA). A compositionally biased stretch (polar residues) spans 2030 to 2039 (PLSNDSPSNS). Positions 2332–2647 (FSSKMNVITS…TTDSIMETIK (316 aa)) constitute a PI3K/PI4K catalytic domain. The interval 2338-2344 (VITSKQR) is G-loop. The tract at residues 2512–2520 (GLGDRHPSN) is catalytic loop. Residues 2532-2557 (HIDFGDCFEVAMLREKFPERVPFRLT) form an activation loop region. The segment at 2615–2635 (DPKTRKDTGGRQNMAGAVLPS) is disordered. The region spanning 2665-2697 (EPLQVTEQLAMLTEQATSPLNLCQSYIGWCPFW) is the FATC domain.

The protein belongs to the PI3/PI4-kinase family. Ubiquitous. Expressed in all major tissues and organs, including the intestine, gonads and hypodermal cells. Expressed in neurons.

Its subcellular location is the nucleus. It catalyses the reaction L-seryl-[protein] + ATP = O-phospho-L-seryl-[protein] + ADP + H(+). The enzyme catalyses L-threonyl-[protein] + ATP = O-phospho-L-threonyl-[protein] + ADP + H(+). Its function is as follows. Serine/threonine-protein kinase that regulates the mRNA translation machinery, probably by modulating the activity of translation factors such as eIF-4G and eIF-2. It may have some protein kinase activity instead of lipid kinase activity. May play a role in P-granule degradation by autophagy in somatic cells during embryogenesis. Required, during larval development, for the establishment of the proper number of germline progenitors, probably upstream of rsks-1 and ife-1. Required for larval development. May act as a mediator of lifespan regulation by insulin signaling and nutrient sensing. This chain is Target of rapamycin homolog, found in Caenorhabditis elegans.